The chain runs to 286 residues: Deleted in azoospermia-like-A (286 aa).

Residues 33 to 114 enclose the RRM domain; it reads NTVFVGGIDI…PAIRKICTYV (82 aa). Residues 155 to 180 enclose the DAZ domain; that stretch reads ACPYPSSPPMAIQQIPVGCQQPGYFQ.

Belongs to the RRM DAZ family. Interacts with the C-terminus of pabp1 and with epabp. Prior to oocyte maturation, found in a complex with epabp and pum2 proteins and spdy1 mRNA; pum2 dissociates from the complex during maturation. As to expression, germ-line specific. Oocyte mRNA expression is first restricted to the granulo-fibrillar material (GFM) of the mitochondrial cloud and then to the oocyte germ plasm at the vegetal cortex. Remains an mRNA component of the germ plasm until the neurula stage. In 2-8 cell embryos, expressed in the germ plasm matrix between germinal granules and mitochondria. Expressed in primordial germ cells (PGCs) later in embryogenesis. In addition to the ovaries of adult females, expressed in the testis of adult and juvenile males in spermatogonia and spermatocytes. The protein is restricted to the embryonic germ plasm and primordial germ cells.

Its subcellular location is the cytoplasm. Its function is as follows. RNA-binding protein that is required for primordial germ cell (PGC) differentiation and indirectly necessary for the migration of PGCs through the endoderm. May promote meiotic cell division during spermatogenesis. Shows a preference for G- and U-rich RNAs and probably binds the 3'-UTR of target mRNAs. Stimulates the initiation of translation of mRNAs through the recruitment of poly(A)-binding proteins (PABPs). The protein is Deleted in azoospermia-like-A (dazl-a) of Xenopus laevis (African clawed frog).